Reading from the N-terminus, the 375-residue chain is POU domain, class 3, transcription factor 1-A (375 aa).

Disordered stretches follow at residues 1–29 (MAAT…RMHQ), 67–138 (PASD…HQPL), and 151–200 (MLGP…PSSD). 3 stretches are compositionally biased toward polar residues: residues 107-117 (VHQQSPSSHAW), 129-138 (SPSSNSHQPL), and 151-160 (MLGPQASSLH). Positions 162 to 177 (SMRDPLHDDPGVHDTQ) are enriched in basic and acidic residues. Residues 194 to 268 (EDAPSSDDLE…LLNKWLEETD (75 aa)) form the POU-specific domain. A DNA-binding region (homeobox) is located at residues 286–345 (KRKKRTSIEVGVKGALENHFLKCPKPSAHEITSLADSLQLEKEVVRVWFCNRRQKEKRMT).

It belongs to the POU transcription factor family. Class-3 subfamily. In terms of tissue distribution, in embryos at the neural fold stage, localized primarily in the anterior neural plate, and localized mostly in the anterior region of the nerve cord of neurula stage embryos. In tailbud stages, expressed predominantly in the eye and brain, with weak expression along the length of the nerve cord. In adults, expressed in skin and brain.

The protein localises to the nucleus. In terms of biological role, acts as a transcription factor. May play a role in neuronal differentiation. In Xenopus laevis (African clawed frog), this protein is POU domain, class 3, transcription factor 1-A (pou3f1-a).